Reading from the N-terminus, the 157-residue chain is MQIQMLLPLVQTLAQQVADQEHLDLVSVQWLTHQSPPILRVEVRHPENDTSLEDCERLSRALEMALDELPEFEFAYVLEVSSPGLSDYLSSDRDFDAFRGFPVRVTTTAPHRGKTLWEGNLIRRDEVNVYLNQRGRSLAIPRSLIASVQLYTPSSEP.

The protein belongs to the RimP family.

It localises to the cytoplasm. In terms of biological role, required for maturation of 30S ribosomal subunits. The polypeptide is Ribosome maturation factor RimP (Thermosynechococcus vestitus (strain NIES-2133 / IAM M-273 / BP-1)).